Consider the following 710-residue polypeptide: Integrator complex subunit 10 (710 aa).

S231, S381, and S382 each carry phosphoserine. K464 participates in a covalent cross-link: Glycyl lysine isopeptide (Lys-Gly) (interchain with G-Cter in SUMO2).

Belongs to the Integrator subunit 10 family. In terms of assembly, component of the Integrator complex, composed of core subunits INTS1, INTS2, INTS3, INTS4, INTS5, INTS6, INTS7, INTS8, INTS9/RC74, INTS10, INTS11/CPSF3L, INTS12, INTS13, INTS14 and INTS15. The core complex associates with protein phosphatase 2A subunits PPP2CA and PPP2R1A, to form the Integrator-PP2A (INTAC) complex. INTS10 is part of the tail subcomplex, composed of INTS10, INTS13, INTS14 and INTS15.

The protein localises to the nucleus. Component of the integrator complex, a multiprotein complex that terminates RNA polymerase II (Pol II) transcription in the promoter-proximal region of genes. The integrator complex provides a quality checkpoint during transcription elongation by driving premature transcription termination of transcripts that are unfavorably configured for transcriptional elongation: the complex terminates transcription by (1) catalyzing dephosphorylation of the C-terminal domain (CTD) of Pol II subunit POLR2A/RPB1 and SUPT5H/SPT5, (2) degrading the exiting nascent RNA transcript via endonuclease activity and (3) promoting the release of Pol II from bound DNA. The integrator complex is also involved in terminating the synthesis of non-coding Pol II transcripts, such as enhancer RNAs (eRNAs), small nuclear RNAs (snRNAs), telomerase RNAs and long non-coding RNAs (lncRNAs). Within the integrator complex, INTS10 is part of the integrator tail module that acts as a platform for the recruitment of transcription factors at promoters. May be not involved in the recruitment of cytoplasmic dynein to the nuclear envelope, probably as component of the integrator complex. This is Integrator complex subunit 10 (Ints10) from Mus musculus (Mouse).